The chain runs to 778 residues: Actin-binding LIM protein 1 (778 aa).

4 consecutive LIM zinc-binding domains span residues 97 to 156 (IHCH…MYGT), 156 to 216 (TRCH…MSSS), 224 to 283 (SNCA…LFGV), and 283 to 343 (VKCE…TKTE). At Ser-216 the chain carries Phosphoserine. Residues 339-370 (STKTEEKLRPTRTSSESIYSRPGSSIPGSPGH) are disordered. Residues 360 to 369 (PGSSIPGSPG) show a composition bias toward low complexity. Residue Ser-367 is modified to Phosphoserine. Phosphotyrosine is present on residues Tyr-373 and Tyr-396. 2 disordered regions span residues 414–510 (YDDK…QAPK) and 552–597 (AAQA…EELL). Phosphoserine is present on residues Ser-422, Ser-426, and Ser-431. Over residues 423–434 (LGESPRTLSPTP) the composition is skewed to polar residues. Thr-433 carries the phosphothreonine modification. Ser-435 is modified (phosphoserine). Tyr-439 carries the post-translational modification Phosphotyrosine. Residues 449 to 474 (RSTSQGSINSPVYSRHSYTPTTSRSP) are compositionally biased toward polar residues. A phosphoserine mark is found at Ser-452, Ser-455, Ser-458, Ser-498, and Ser-587. Positions 590 to 614 (EEDDEELLRRRQLQEEQLMKLNSGL) form a coiled coil. Lys-620 is covalently cross-linked (Glycyl lysine isopeptide (Lys-Gly) (interchain with G-Cter in SUMO2)). Ser-640, Ser-655, Ser-677, and Ser-706 each carry phosphoserine. The region spanning 710–778 (MLEPKIFPYE…NDMKKKAKLF (69 aa)) is the HP domain.

Binds F-actin. Interacts with ABRA. As to expression, detected in liver, heart, skeletal muscle, brain and retina, where it is concentrated in the inner segment and in the outer plexiform layers.

It localises to the cytoplasm. The protein localises to the cytoskeleton. Its function is as follows. May act as scaffold protein. May play a role in the development of the retina. Has been suggested to play a role in axon guidance. In Homo sapiens (Human), this protein is Actin-binding LIM protein 1 (ABLIM1).